A 95-amino-acid chain; its full sequence is MLHTLSCSPYHADLDTLLRSLEQGDALVLLQDGVIAALVGGDIIHRLLDSAVLLYALRPDTEARGMTEQISNSVVLIGYNEFVQLTVEHPQQLAW.

It belongs to the DsrH/TusB family. In terms of assembly, heterohexamer, formed by a dimer of trimers. The hexameric TusBCD complex contains 2 copies each of TusB, TusC and TusD. The TusBCD complex interacts with TusE.

The protein resides in the cytoplasm. Functionally, part of a sulfur-relay system required for 2-thiolation of 5-methylaminomethyl-2-thiouridine (mnm(5)s(2)U) at tRNA wobble positions. The polypeptide is Protein TusB (Pectobacterium atrosepticum (strain SCRI 1043 / ATCC BAA-672) (Erwinia carotovora subsp. atroseptica)).